Consider the following 921-residue polypeptide: Isoleucine--tRNA ligase (921 aa).

A 'HIGH' region motif is present at residues 57 to 67 (PYANGDIHMGH). Glu-552 contacts L-isoleucyl-5'-AMP. The 'KMSKS' region signature appears at 593-597 (KMSKS). Position 596 (Lys-596) interacts with ATP. Zn(2+) contacts are provided by Cys-888, Cys-891, Cys-908, and Cys-911.

The protein belongs to the class-I aminoacyl-tRNA synthetase family. IleS type 1 subfamily. Monomer. Zn(2+) serves as cofactor.

Its subcellular location is the cytoplasm. The catalysed reaction is tRNA(Ile) + L-isoleucine + ATP = L-isoleucyl-tRNA(Ile) + AMP + diphosphate. In terms of biological role, catalyzes the attachment of isoleucine to tRNA(Ile). As IleRS can inadvertently accommodate and process structurally similar amino acids such as valine, to avoid such errors it has two additional distinct tRNA(Ile)-dependent editing activities. One activity is designated as 'pretransfer' editing and involves the hydrolysis of activated Val-AMP. The other activity is designated 'posttransfer' editing and involves deacylation of mischarged Val-tRNA(Ile). This is Isoleucine--tRNA ligase from Bacillus mycoides (strain KBAB4) (Bacillus weihenstephanensis).